Consider the following 312-residue polypeptide: 4-hydroxyphenylacetate decarboxylase activating enzyme (312 aa).

A Radical SAM core domain is found at 16–299 (HDGPGCRTSV…MEHLQQLYLD (284 aa)). The [4Fe-4S] cluster site is built by Cys30, Cys34, Cys37, Cys56, Cys62, Cys65, and Cys101. S-adenosyl-L-methionine is bound at residue 36–38 (WCA). 4Fe-4S ferredoxin-type domains lie at 47–79 (KHIMVAENVCKWKNGCRSCINACSHDSIKFSED) and 80–112 (GKLKISWDTCEKCETFDCVNMCPNNALKQCVKE). Residues Gly140, 189–191 (DVK), and His263 contribute to the S-adenosyl-L-methionine site.

The protein belongs to the organic radical-activating enzymes family. Monomer. [4Fe-4S] cluster is required as a cofactor.

The catalysed reaction is glycyl-[protein] + reduced [flavodoxin] + S-adenosyl-L-methionine = glycin-2-yl radical-[protein] + semiquinone [flavodoxin] + 5'-deoxyadenosine + L-methionine + H(+). Functionally, catalyzes activation of 4-hydroxyphenylacetate decarboxylase under anaerobic conditions by generation of an organic free radical on a glycine residue, via a homolytic cleavage of S-adenosyl-L-methionine (SAM). This Clostridium scatologenes protein is 4-hydroxyphenylacetate decarboxylase activating enzyme.